The primary structure comprises 138 residues: Phosphoribosyl-AMP cyclohydrolase (138 aa).

Aspartate 85 provides a ligand contact to Mg(2+). Position 86 (cysteine 86) interacts with Zn(2+). 2 residues coordinate Mg(2+): aspartate 87 and aspartate 89. 2 residues coordinate Zn(2+): cysteine 102 and cysteine 109.

The protein belongs to the PRA-CH family. In terms of assembly, homodimer. It depends on Mg(2+) as a cofactor. Requires Zn(2+) as cofactor.

The protein resides in the cytoplasm. The catalysed reaction is 1-(5-phospho-beta-D-ribosyl)-5'-AMP + H2O = 1-(5-phospho-beta-D-ribosyl)-5-[(5-phospho-beta-D-ribosylamino)methylideneamino]imidazole-4-carboxamide. The protein operates within amino-acid biosynthesis; L-histidine biosynthesis; L-histidine from 5-phospho-alpha-D-ribose 1-diphosphate: step 3/9. Functionally, catalyzes the hydrolysis of the adenine ring of phosphoribosyl-AMP. The polypeptide is Phosphoribosyl-AMP cyclohydrolase (Methanothermobacter thermautotrophicus (strain ATCC 29096 / DSM 1053 / JCM 10044 / NBRC 100330 / Delta H) (Methanobacterium thermoautotrophicum)).